Consider the following 217-residue polypeptide: N-(5'-phosphoribosyl)anthranilate isomerase (217 aa).

Belongs to the TrpF family.

It catalyses the reaction N-(5-phospho-beta-D-ribosyl)anthranilate = 1-(2-carboxyphenylamino)-1-deoxy-D-ribulose 5-phosphate. The protein operates within amino-acid biosynthesis; L-tryptophan biosynthesis; L-tryptophan from chorismate: step 3/5. The polypeptide is N-(5'-phosphoribosyl)anthranilate isomerase (Chlorobium phaeobacteroides (strain BS1)).